The sequence spans 411 residues: Serpin A3-2 (411 aa).

The first 24 residues, 1–24 (MRAERTSFLLALGLLVAGIRSVHC), serve as a signal peptide directing secretion. N-linked (GlcNAc...) asparagine glycosylation is found at N100, N180, N230, and N264.

This sequence belongs to the serpin family. As to quaternary structure, homodimer.

The protein resides in the cytoplasmic vesicle. Its subcellular location is the secretory vesicle. It is found in the chromaffin granule. The protein localises to the secreted. Functionally, serine protease inhibitor. The polypeptide is Serpin A3-2 (Bos taurus (Bovine)).